Here is a 522-residue protein sequence, read N- to C-terminus: N-acetylgalactosamine-6-sulfatase (522 aa).

An N-terminal signal peptide occupies residues 1-25; it reads MAPVAAATGWRLLLVLSAAGLGAAG. The tract at residues 27–379 is catalytic domain; sequence PQPPNILLLL…PAMLGGQLTD (353 aa). Aspartate 38, aspartate 39, and cysteine 78 together coordinate Ca(2+). The active-site Nucleophile is cysteine 78. At cysteine 78 the chain carries 3-oxoalanine (Cys). Residue histidine 141 is part of the active site. N-linked (GlcNAc...) asparagine glycosylation is present at asparagine 203. Ca(2+) is bound by residues aspartate 288 and asparagine 289. Cysteine 308 and cysteine 419 are disulfide-bonded. N-linked (GlcNAc...) asparagine glycosylation is present at asparagine 423. 2 disulfide bridges follow: cysteine 489-cysteine 518 and cysteine 501-cysteine 507.

It belongs to the sulfatase family. As to quaternary structure, homodimer. Requires Ca(2+) as cofactor. Post-translationally, the conversion to 3-oxoalanine (also known as C-formylglycine, FGly), of a serine or cysteine residue in prokaryotes and of a cysteine residue in eukaryotes, is critical for catalytic activity.

The protein resides in the lysosome. The catalysed reaction is Hydrolysis of the 6-sulfate groups of the N-acetyl-D-galactosamine 6-sulfate units of chondroitin sulfate and of the D-galactose 6-sulfate units of keratan sulfate.. This is N-acetylgalactosamine-6-sulfatase (GALNS) from Canis lupus familiaris (Dog).